A 271-amino-acid chain; its full sequence is Ribosomal RNA small subunit methyltransferase A (271 aa).

S-adenosyl-L-methionine is bound by residues Asn28, Leu30, Gly54, Glu75, Asp99, and Asn117.

The protein belongs to the class I-like SAM-binding methyltransferase superfamily. rRNA adenine N(6)-methyltransferase family. RsmA subfamily.

The protein localises to the cytoplasm. The catalysed reaction is adenosine(1518)/adenosine(1519) in 16S rRNA + 4 S-adenosyl-L-methionine = N(6)-dimethyladenosine(1518)/N(6)-dimethyladenosine(1519) in 16S rRNA + 4 S-adenosyl-L-homocysteine + 4 H(+). In terms of biological role, specifically dimethylates two adjacent adenosines (A1518 and A1519) in the loop of a conserved hairpin near the 3'-end of 16S rRNA in the 30S particle. May play a critical role in biogenesis of 30S subunits. This Thermus thermophilus (strain ATCC BAA-163 / DSM 7039 / HB27) protein is Ribosomal RNA small subunit methyltransferase A.